Reading from the N-terminus, the 171-residue chain is MSDHKKAILAGGCFWGMQDLIRKQPGVVSTRVGYTGGQNDHPTYRNHPGHAESIEITYDPAQTDYRALLEFFFQIHDPTTKNRQGNDVGTSYRSAIFYVDDDQKRVALDTIADVDASGLWPGKVVTEVTPAGEFWEAEPEHQDYLERMPWGYTCHFPRPDWKLPKRADAKA.

C13 is an active-site residue.

Belongs to the MsrA Met sulfoxide reductase family.

It catalyses the reaction L-methionyl-[protein] + [thioredoxin]-disulfide + H2O = L-methionyl-(S)-S-oxide-[protein] + [thioredoxin]-dithiol. The enzyme catalyses [thioredoxin]-disulfide + L-methionine + H2O = L-methionine (S)-S-oxide + [thioredoxin]-dithiol. Functionally, has an important function as a repair enzyme for proteins that have been inactivated by oxidation. Catalyzes the reversible oxidation-reduction of methionine sulfoxide in proteins to methionine. This is Peptide methionine sulfoxide reductase MsrA from Mycobacterium sp. (strain JLS).